The chain runs to 450 residues: Phosphoglucosamine mutase (450 aa).

Ser101 serves as the catalytic Phosphoserine intermediate. Ser101, Asp240, Asp242, and Asp244 together coordinate Mg(2+). Ser101 is modified (phosphoserine).

This sequence belongs to the phosphohexose mutase family. Mg(2+) serves as cofactor. Post-translationally, activated by phosphorylation.

The enzyme catalyses alpha-D-glucosamine 1-phosphate = D-glucosamine 6-phosphate. Its function is as follows. Catalyzes the conversion of glucosamine-6-phosphate to glucosamine-1-phosphate. The sequence is that of Phosphoglucosamine mutase from Streptococcus gordonii (strain Challis / ATCC 35105 / BCRC 15272 / CH1 / DL1 / V288).